Here is a 355-residue protein sequence, read N- to C-terminus: S-adenosylmethionine:tRNA ribosyltransferase-isomerase (355 aa).

Belongs to the QueA family. As to quaternary structure, monomer.

It is found in the cytoplasm. The enzyme catalyses 7-aminomethyl-7-carbaguanosine(34) in tRNA + S-adenosyl-L-methionine = epoxyqueuosine(34) in tRNA + adenine + L-methionine + 2 H(+). Its pathway is tRNA modification; tRNA-queuosine biosynthesis. Its function is as follows. Transfers and isomerizes the ribose moiety from AdoMet to the 7-aminomethyl group of 7-deazaguanine (preQ1-tRNA) to give epoxyqueuosine (oQ-tRNA). The chain is S-adenosylmethionine:tRNA ribosyltransferase-isomerase from Jannaschia sp. (strain CCS1).